The chain runs to 301 residues: Cutinase (301 aa).

The signal sequence occupies residues 1–40 (MAVMTPRRERSSLLSRALQVTAAAATALVTAVSLAAPAHA). Tyr-100 provides a ligand contact to poly(ethylene terephthalate). Ser-170 serves as the catalytic Nucleophile. 2 residues coordinate poly(ethylene terephthalate): Met-171 and Trp-195. Active-site charge relay system residues include Asp-216 and His-248. Residues Cys-281 and Cys-299 are joined by a disulfide bond.

The protein belongs to the AB hydrolase superfamily.

The protein resides in the secreted. It is found in the periplasm. It carries out the reaction a butanoate ester + H2O = an aliphatic alcohol + butanoate + H(+). It catalyses the reaction (ethylene terephthalate)(n) + H2O = (ethylene terephthalate)(n-1) + 4-[(2-hydroxyethoxy)carbonyl]benzoate + H(+). The enzyme catalyses cutin + H2O = cutin monomers.. With respect to regulation, activated by magnesium ions. Activated by calcium ions. Inhibited by the serine hydrolase inhibitor phenylmethanesulfonyl fluoride (PMSF). Its function is as follows. Catalyzes the hydrolysis of cutin, a polyester that forms the structure of plant cuticle. Shows esterase activity towards p-nitrophenol-linked aliphatic esters (pNP-aliphatic esters). Also hydrolyzes the triglyceride triolein. Capable of degrading the plastic poly(ethylene terephthalate) (PET), the most abundant polyester plastic in the world. The protein is Cutinase of Thermobifida fusca (strain YX).